The following is a 296-amino-acid chain: Glycine--tRNA ligase alpha subunit (296 aa).

This sequence belongs to the class-II aminoacyl-tRNA synthetase family. As to quaternary structure, tetramer of two alpha and two beta subunits.

Its subcellular location is the cytoplasm. It carries out the reaction tRNA(Gly) + glycine + ATP = glycyl-tRNA(Gly) + AMP + diphosphate. This is Glycine--tRNA ligase alpha subunit from Listeria monocytogenes serotype 4b (strain CLIP80459).